Consider the following 100-residue polypeptide: Urease subunit gamma (100 aa).

Belongs to the urease gamma subunit family. As to quaternary structure, heterotrimer of UreA (gamma), UreB (beta) and UreC (alpha) subunits. Three heterotrimers associate to form the active enzyme.

The protein resides in the cytoplasm. It catalyses the reaction urea + 2 H2O + H(+) = hydrogencarbonate + 2 NH4(+). It participates in nitrogen metabolism; urea degradation; CO(2) and NH(3) from urea (urease route): step 1/1. The sequence is that of Urease subunit gamma from Staphylococcus saprophyticus subsp. saprophyticus (strain ATCC 15305 / DSM 20229 / NCIMB 8711 / NCTC 7292 / S-41).